The chain runs to 101 residues: MEKFKRPFRKSKRSFRRRLPPIGLGDRIDYRNMSLISRFISEQGKILPRRVNRLTLKQQRLITIAIKQARILSLLPFLNNEKQFERAESISRTTGTRTRKK.

It belongs to the bacterial ribosomal protein bS18 family. As to quaternary structure, part of the 30S ribosomal subunit.

It localises to the plastid. Its subcellular location is the chloroplast. In Nymphaea alba (White water-lily), this protein is Small ribosomal subunit protein bS18c.